The primary structure comprises 130 residues: Protein ApaG (130 aa).

The region spanning 3 to 127 (SEVTRSIRVT…FSLDSPHGRS (125 aa)) is the ApaG domain.

This Rhodospirillum centenum (strain ATCC 51521 / SW) protein is Protein ApaG.